The primary structure comprises 225 residues: Uracil-DNA glycosylase (225 aa).

Asp-65 serves as the catalytic Proton acceptor.

The protein belongs to the uracil-DNA glycosylase (UDG) superfamily. UNG family.

Its subcellular location is the cytoplasm. The catalysed reaction is Hydrolyzes single-stranded DNA or mismatched double-stranded DNA and polynucleotides, releasing free uracil.. Excises uracil residues from the DNA which can arise as a result of misincorporation of dUMP residues by DNA polymerase or due to deamination of cytosine. The protein is Uracil-DNA glycosylase of Bacillus cytotoxicus (strain DSM 22905 / CIP 110041 / 391-98 / NVH 391-98).